The primary structure comprises 120 residues: Aspartate 1-decarboxylase (120 aa).

Serine 25 serves as the catalytic Schiff-base intermediate with substrate; via pyruvic acid. A Pyruvic acid (Ser) modification is found at serine 25. Threonine 57 lines the substrate pocket. Tyrosine 58 functions as the Proton donor in the catalytic mechanism. Glycine 73 to alanine 75 is a substrate binding site.

The protein belongs to the PanD family. Heterooctamer of four alpha and four beta subunits. Pyruvate is required as a cofactor. Is synthesized initially as an inactive proenzyme, which is activated by self-cleavage at a specific serine bond to produce a beta-subunit with a hydroxyl group at its C-terminus and an alpha-subunit with a pyruvoyl group at its N-terminus.

The protein localises to the cytoplasm. It carries out the reaction L-aspartate + H(+) = beta-alanine + CO2. It functions in the pathway cofactor biosynthesis; (R)-pantothenate biosynthesis; beta-alanine from L-aspartate: step 1/1. Functionally, catalyzes the pyruvoyl-dependent decarboxylation of aspartate to produce beta-alanine. In Ralstonia nicotianae (strain ATCC BAA-1114 / GMI1000) (Ralstonia solanacearum), this protein is Aspartate 1-decarboxylase.